We begin with the raw amino-acid sequence, 814 residues long: Oxysterol-binding protein-related protein 1C (814 aa).

Residues 103–235 (GNGIAGILYK…WVEALQAVKD (133 aa)) enclose the PH domain. A coiled-coil region spans residues 300–367 (LLIDTLRQLE…AEEEFDEEEN (68 aa)). Disordered stretches follow at residues 319–366 (VVDE…DEEE) and 379–411 (SSFKSSGSGFRTSSFSSDEDGFESEDDIDPSIK). The span at 347–366 (ESDDDNERGDAAEEEFDEEE) shows a compositional bias: acidic residues. Positions 379 to 394 (SSFKSSGSGFRTSSFS) are enriched in low complexity. Positions 395-407 (SDEDGFESEDDID) are enriched in acidic residues.

The protein belongs to the OSBP family. As to expression, expressed in roots, leaves, stems, flowers and pollen.

Its function is as follows. May be involved in the transport of sterols. This Arabidopsis thaliana (Mouse-ear cress) protein is Oxysterol-binding protein-related protein 1C (ORP1C).